The chain runs to 38 residues: Esterase-5 (38 aa).

The interval 1 to 38 (SAAADPLIVELPNGKVRGRDNEGYYEAEGIPRAEPPVG) is disordered.

The protein belongs to the type-B carboxylesterase/lipase family.

The catalysed reaction is a carboxylic ester + H2O = an alcohol + a carboxylate + H(+). This is Esterase-5 (Est-5) from Drosophila mojavensis (Fruit fly).